Here is a 221-residue protein sequence, read N- to C-terminus: Histone H1-like protein HC2 (221 aa).

2 stretches are compositionally biased toward basic residues: residues 1-50 and 59-70; these read MLGV…KTVA and PVAKKATAKKAP. A disordered region spans residues 1 to 70; that stretch reads MLGVQKKRST…AKKATAKKAP (70 aa).

The protein belongs to the histone H1/H5 family. HCT subfamily.

In terms of biological role, might have a role in establishing the nucleoid structure of elementary bodies. The polypeptide is Histone H1-like protein HC2 (hctB) (Chlamydia trachomatis serovar L2 (strain ATCC VR-902B / DSM 19102 / 434/Bu)).